The following is a 319-amino-acid chain: Lambda-crystallin homolog (319 aa).

An N-acetylalanine modification is found at A2. A Phosphoserine modification is found at S3. Residues 16–17 (VI), D36, E97, and K102 each bind NAD(+). S111 carries the phosphoserine modification.

This sequence belongs to the 3-hydroxyacyl-CoA dehydrogenase family. As to quaternary structure, homodimer. As to expression, widely expressed, with highest levels in liver and kidney.

Its subcellular location is the cytoplasm. The catalysed reaction is L-gulonate + NAD(+) = 3-dehydro-L-gulonate + NADH + H(+). Inhibited by malonate. Functionally, has high L-gulonate 3-dehydrogenase activity. It also exhibits low dehydrogenase activity toward L-3-hydroxybutyrate (HBA) and L-threonate. In Homo sapiens (Human), this protein is Lambda-crystallin homolog (CRYL1).